Here is a 361-residue protein sequence, read N- to C-terminus: Probable mannitol dehydrogenase (361 aa).

The Zn(2+) site is built by Cys-51, His-73, Cys-104, Cys-107, Cys-110, Cys-118, and Cys-167.

It belongs to the zinc-containing alcohol dehydrogenase family. Requires Zn(2+) as cofactor.

It catalyses the reaction D-mannitol + NAD(+) = D-mannose + NADH + H(+). Oxidizes mannitol to mannose. Provides the initial step by which translocated mannitol is committed to central metabolism and, by regulating mannitol pool size, is important in regulating salt tolerance at the cellular level. This is Probable mannitol dehydrogenase (ELI3) from Mesembryanthemum crystallinum (Common ice plant).